A 428-amino-acid chain; its full sequence is 3-phosphoshikimate 1-carboxyvinyltransferase (428 aa).

3 residues coordinate 3-phosphoshikimate: Lys23, Ser24, and Arg28. A phosphoenolpyruvate-binding site is contributed by Lys23. Gly92 and Arg120 together coordinate phosphoenolpyruvate. Residues Ser165, Gln167, Asp312, and Lys339 each contribute to the 3-phosphoshikimate site. Gln167 contacts phosphoenolpyruvate. The active-site Proton acceptor is the Asp312. The phosphoenolpyruvate site is built by Arg343 and Arg384.

Belongs to the EPSP synthase family. Monomer.

The protein localises to the cytoplasm. It carries out the reaction 3-phosphoshikimate + phosphoenolpyruvate = 5-O-(1-carboxyvinyl)-3-phosphoshikimate + phosphate. The protein operates within metabolic intermediate biosynthesis; chorismate biosynthesis; chorismate from D-erythrose 4-phosphate and phosphoenolpyruvate: step 6/7. Catalyzes the transfer of the enolpyruvyl moiety of phosphoenolpyruvate (PEP) to the 5-hydroxyl of shikimate-3-phosphate (S3P) to produce enolpyruvyl shikimate-3-phosphate and inorganic phosphate. The chain is 3-phosphoshikimate 1-carboxyvinyltransferase from Sulfurimonas denitrificans (strain ATCC 33889 / DSM 1251) (Thiomicrospira denitrificans (strain ATCC 33889 / DSM 1251)).